The chain runs to 253 residues: Salivary gland SP38-40.B protein (253 aa).

The first 21 residues, 1-21, serve as a signal peptide directing secretion; sequence MRIKFLVVLAVICLLAHYASA. Disordered stretches follow at residues 23–51, 140–168, and 203–253; these read GMGGDKKPKDAPKPKDAPKPKEVKPVKAD, KDEKKEKKVVKVIKPPKEKPPKKPRKECS, and VQGK…DAKK. Composition is skewed to basic and acidic residues over residues 26–51 and 154–168; these read GDKKPKDAPKPKDAPKPKEVKPVKAD and PPKEKPPKKPRKECS. A run of 2 repeats spans residues 29-34 and 35-40. The segment at 29-47 is 3 X 6 AA approximate tandem repeats of K-P-K-D-A-P; it reads KPKDAPKPKDAPKPKEVKP. A 1-3; approximate repeat occupies 41–47; the sequence is KPKEVKP. 2 tandem repeats follow at residues 153–156 and 158–161. The 3 X 4 AA approximate tandem repeats of K-P-P-K stretch occupies residues 153 to 166; sequence KPPKEKPPKKPRKE. The 2-3; approximate repeat unit spans residues 162–166; sequence KPRKE. Positions 206–217 are enriched in basic residues; the sequence is KQKKGAKKAKGG. A run of 6 repeats spans residues 222-225, 226-229, 230-233, 234-237, 238-241, and 242-245. The 7 X 4 AA approximate tandem repeats of P-K-P-[GAV] stretch occupies residues 222–249; that stretch reads PKPGPKPAPKPGPKPAPKPVPKPADKPK. Residues 225-243 show a composition bias toward pro residues; sequence GPKPAPKPGPKPAPKPVPK. A compositionally biased stretch (basic and acidic residues) spans 244 to 253; sequence PADKPKDAKK. Residues 246–249 form a 3-7; approximate repeat; the sequence is DKPK.

As to expression, salivary gland.

The protein localises to the secreted. In terms of biological role, used by the larvae to construct a supramolecular structure, the larval tube. The protein is Salivary gland SP38-40.B protein (SP38-40.B) of Chironomus tentans (Midge).